We begin with the raw amino-acid sequence, 1188 residues long: DNA-directed RNA polymerase subunit beta (1188 aa).

This sequence belongs to the RNA polymerase beta chain family. The RNAP catalytic core consists of 2 alpha, 1 beta, 1 beta' and 1 omega subunit. When a sigma factor is associated with the core the holoenzyme is formed, which can initiate transcription.

It carries out the reaction RNA(n) + a ribonucleoside 5'-triphosphate = RNA(n+1) + diphosphate. In terms of biological role, DNA-dependent RNA polymerase catalyzes the transcription of DNA into RNA using the four ribonucleoside triphosphates as substrates. In Streptococcus equi subsp. equi (strain 4047), this protein is DNA-directed RNA polymerase subunit beta.